Reading from the N-terminus, the 201-residue chain is Large ribosomal subunit protein uL4 (201 aa).

Positions 44 to 71 are disordered; the sequence is RAQKTRAEVTGSGKKPWRQKGTGRARSG.

Belongs to the universal ribosomal protein uL4 family. In terms of assembly, part of the 50S ribosomal subunit.

Its function is as follows. One of the primary rRNA binding proteins, this protein initially binds near the 5'-end of the 23S rRNA. It is important during the early stages of 50S assembly. It makes multiple contacts with different domains of the 23S rRNA in the assembled 50S subunit and ribosome. Forms part of the polypeptide exit tunnel. The chain is Large ribosomal subunit protein uL4 from Escherichia fergusonii (strain ATCC 35469 / DSM 13698 / CCUG 18766 / IAM 14443 / JCM 21226 / LMG 7866 / NBRC 102419 / NCTC 12128 / CDC 0568-73).